The following is a 514-amino-acid chain: Ribonuclease Y (514 aa).

Residues 3–23 form a helical membrane-spanning segment; it reads YMIIYEIIAGILIVVAILIHF. In terms of domain architecture, KH spans 204-289; the sequence is TVHVVTLPND…EMVEKAEKEL (86 aa). Residues 330 to 423 form the HD domain; it reads VLKHSVEVAY…VQAADAISAA (94 aa).

Belongs to the RNase Y family.

Its subcellular location is the cell membrane. Functionally, endoribonuclease that initiates mRNA decay. This Clostridium kluyveri (strain ATCC 8527 / DSM 555 / NBRC 12016 / NCIMB 10680 / K1) protein is Ribonuclease Y.